A 313-amino-acid chain; its full sequence is Putative S-adenosyl-L-methionine-dependent methyltransferase MAV_5150 (313 aa).

S-adenosyl-L-methionine is bound by residues D139 and 168–169; that span reads DL.

It belongs to the UPF0677 family.

Functionally, exhibits S-adenosyl-L-methionine-dependent methyltransferase activity. The polypeptide is Putative S-adenosyl-L-methionine-dependent methyltransferase MAV_5150 (Mycobacterium avium (strain 104)).